A 201-amino-acid polypeptide reads, in one-letter code: Lymphocyte antigen 6 complex locus protein G5b (201 aa).

The N-terminal stretch at 1-18 (MKVHMLVGVLVMVGFTVG) is a signal peptide. A UPAR/Ly6 domain is found at 26 to 118 (RTCHFCLVED…SPQLQSSLPE (93 aa)). 5 disulfide bridges follow: C28-C55, C31-C40, C47-C73, C81-C98, and C99-C104. N-linked (GlcNAc...) asparagine glycans are attached at residues N141 and N183.

As to quaternary structure, forms oligomer. Post-translationally, N-glycosylated.

The protein localises to the secreted. This Homo sapiens (Human) protein is Lymphocyte antigen 6 complex locus protein G5b (LY6G5B).